The primary structure comprises 416 residues: Enterobactin exporter EntS (416 aa).

Topologically, residues 1 to 21 (MNKQSWLLNLSLLKTHPAFRA) are cytoplasmic. A helical transmembrane segment spans residues 22–42 (VFLARFISIVSLGLLGVAVPV). The Periplasmic portion of the chain corresponds to 43–55 (QIQMMTHSTWQVG). The chain crosses the membrane as a helical span at residues 56 to 76 (LSVTLTGGAMFVGLMVGGVLA). Over 77 to 83 (DRYERKK) the chain is Cytoplasmic. The helical transmembrane segment at 84 to 104 (VILLARGTCGIGFIGLCLNAL) threads the bilayer. Over 105-109 (LPEPS) the chain is Periplasmic. Residues 110-130 (LLAIYLLGLWDGFFASLGVTA) form a helical membrane-spanning segment. Residues 131 to 156 (LLAATPALVGRENLMQAGAITMLTVR) lie on the Cytoplasmic side of the membrane. The helical transmembrane segment at 157 to 177 (LGSVISPMIGGLLLATGGVAW) threads the bilayer. Asn178 is a topological domain (periplasmic). A helical membrane pass occupies residues 179-199 (YGLAAAGTFITLLPLLSLPAL). The Cytoplasmic portion of the chain corresponds to 200-218 (PPPPQPREHPLKSLLAGFR). The helical transmembrane segment at 219-239 (FLLASPLVGGIALLGGLLTMA) threads the bilayer. Residues 240-256 (SAVRVLYPALADNWQMS) lie on the Periplasmic side of the membrane. The helical transmembrane segment at 257–277 (AAQIGFLYAAIPLGAAIGALT) threads the bilayer. Residues 278–287 (SGKLAHSVRP) are Cytoplasmic-facing. The chain crosses the membrane as a helical span at residues 288 to 307 (GLLMLLSTLGAFLAISLFGL). Over 308–313 (MPMWIL) the chain is Periplasmic. The chain crosses the membrane as a helical span at residues 314–336 (GVVCLALFGWLSAVSSLLQYTML). The Cytoplasmic segment spans residues 337-356 (QTQTPEAMLGRINGLWTAQN). Residues 357-377 (VTGDAIGAALLGGLGAMMTPV) traverse the membrane as a helical segment. Residue Ala378 is a topological domain, periplasmic. A helical transmembrane segment spans residues 379 to 399 (SASASGFGLLIIGVLLLLVLV). The Cytoplasmic portion of the chain corresponds to 400 to 416 (ELRRFRQTPPQVTASDS).

The protein belongs to the major facilitator superfamily. EntS (TC 2.A.1.38) family.

The protein localises to the cell inner membrane. Functionally, component of an export pathway for enterobactin. The polypeptide is Enterobactin exporter EntS (Escherichia coli O45:K1 (strain S88 / ExPEC)).